Here is an 82-residue protein sequence, read N- to C-terminus: Putative defensin-like protein 70 (82 aa).

A signal peptide spans 1–27 (MKMESSKMLVVFTLMVLIAVSSDLVSG). 4 disulfides stabilise this stretch: Cys-39-Cys-80, Cys-43-Cys-66, Cys-52-Cys-78, and Cys-56-Cys-79.

The protein belongs to the DEFL family.

It is found in the secreted. The sequence is that of Putative defensin-like protein 70 (LCR83) from Arabidopsis thaliana (Mouse-ear cress).